A 176-amino-acid chain; its full sequence is Sperm-egg fusion protein TMEM95 (176 aa).

The signal sequence occupies residues 1 to 16 (MWRLALGGVFLAAAQA). Intrachain disulfides connect C17–C118, C20–C121, C105–C128, and C109–C134. Residues 17–145 (CVFCRLPAHD…PGSQDLWEAK (129 aa)) lie on the Extracellular side of the membrane. Residues 146–166 (ILLLSIFGAFLLLGVLSLLVE) form a helical membrane-spanning segment. Over 167–176 (SHHLQAKSGL) the chain is Cytoplasmic.

This sequence belongs to the TMEM95 family. As to quaternary structure, does not interact with sperm-egg fusion proteins IZUMO1 or IZUMO1R/JUNO. In terms of processing, N-glycosylated. In terms of tissue distribution, spermatozoa (at protein level).

Its subcellular location is the cytoplasmic vesicle. The protein resides in the secretory vesicle. The protein localises to the acrosome membrane. In terms of biological role, sperm protein required for fusion of sperm with the egg membrane during fertilization. The protein is Sperm-egg fusion protein TMEM95 of Homo sapiens (Human).